The sequence spans 1801 residues: Laminin subunit beta-2 (1801 aa).

Residues 1 to 35 (MEWASGKPGRGRQGQPVPWELRLGLLLSVLAATLA) form the signal peptide. Residues 46 to 285 (SRGSCYPATG…ALYELVIRGN (240 aa)) form the Laminin N-terminal domain. Residue Asn251 is glycosylated (N-linked (GlcNAc...) asparagine). 19 disulfides stabilise this stretch: Cys286–Cys295, Cys288–Cys313, Cys315–Cys324, Cys327–Cys347, Cys350–Cys359, Cys352–Cys377, Cys380–Cys389, Cys392–Cys410, Cys413–Cys426, Cys415–Cys441, Cys443–Cys452, Cys455–Cys470, Cys473–Cys487, Cys475–Cys494, Cys496–Cys505, Cys508–Cys522, Cys525–Cys537, Cys527–Cys544, and Cys546–Cys555. Laminin EGF-like domains follow at residues 286 to 349 (CFCY…ACRK), 350 to 412 (CECN…ACRP), 413 to 472 (CDCD…GCQR), and 473 to 524 (CQCN…GCRP). Asn371 carries N-linked (GlcNAc...) asparagine glycosylation. Residues 525–555 (CDCDVGGALDPQCDEATGQCPCRPHMIGRRC) form the Laminin EGF-like 5; truncated domain. The region spanning 564–780 (RPFLDHLTWE…LLISASSLVY (217 aa)) is the Laminin IV type B domain. Intrachain disulfides connect Cys786–Cys798, Cys788–Cys805, Cys807–Cys816, Cys819–Cys831, Cys834–Cys846, Cys836–Cys853, Cys855–Cys864, Cys867–Cys877, Cys880–Cys889, Cys882–Cys896, Cys899–Cys908, Cys911–Cys927, Cys930–Cys946, Cys932–Cys957, Cys959–Cys968, Cys971–Cys986, Cys989–Cys1003, Cys991–Cys1010, Cys1013–Cys1022, Cys1025–Cys1038, Cys1041–Cys1061, Cys1043–Cys1068, Cys1070–Cys1079, Cys1082–Cys1095, Cys1098–Cys1110, Cys1100–Cys1117, Cys1119–Cys1128, Cys1131–Cys1143, Cys1146–Cys1158, Cys1148–Cys1165, Cys1167–Cys1176, and Cys1179–Cys1190. Laminin EGF-like domains lie at 786–833 (CQCD…GCQA), 834–879 (CQCS…NCRP), 880–929 (CVCN…QCRP), 930–988 (CPCP…RCQL), 989–1040 (CECS…SCHR), 1041–1097 (CTCN…GCQP), 1098–1145 (CACH…QCRA), and 1146–1192 (CDCD…ACHP). N-linked (GlcNAc...) asparagine glycosylation occurs at Asn1088. The tract at residues 1193-1412 (CHACFGDWDR…LSLTGVNELV (220 aa)) is domain II. A glycan (N-linked (GlcNAc...) asparagine) is linked at Asn1252. The stretch at 1259–1306 (AKLVEATEGLRHEIGKTTERLTQLEAELTDVQDENFNANHALSGLERD) forms a coiled coil. 2 N-linked (GlcNAc...) asparagine glycosylation sites follow: Asn1311 and Asn1351. The segment at 1413 to 1445 (CGAPGDAPCATSPCGGAGCRDEDGQPRCGGLGC) is domain alpha. A domain I region spans residues 1446-1801 (SGAAATADLA…LQVQIYNTCQ (356 aa)). The stretch at 1475–1529 (GILSRVSETRRQAEEAQQRAQAALDKANASRGQVEQANQELRELIQNVKDFLSQE) forms a coiled coil. The N-linked (GlcNAc...) asparagine glycan is linked to Asn1502. A Phosphoserine modification is found at Ser1535. Residues 1576–1793 (LAHTMGDVRR…RSVLQAINLQ (218 aa)) are a coiled coil. Residues 1684 to 1694 (ASTAEETAGSA) show a composition bias toward low complexity. A disordered region spans residues 1684–1703 (ASTAEETAGSAQSRAREAEK).

In terms of assembly, laminin is a complex glycoprotein, consisting of three different polypeptide chains (alpha, beta, gamma), which are bound to each other by disulfide bonds into a cross-shaped molecule comprising one long and three short arms with globules at each end. Beta-2 is a subunit of laminin-3 (laminin-121 or S-laminin), laminin-4 (laminin-221 or S-merosin), laminin-7 (laminin-321 or KS-laminin), laminin-9 (laminin-421), laminin-11 (laminin-521), laminin-14 (laminin-423) and laminin-15 (laminin-523). Found in the basement membranes (major component). S-laminin is concentrated in the synaptic cleft of the neuromuscular junction.

The protein resides in the secreted. Its subcellular location is the extracellular space. It is found in the extracellular matrix. The protein localises to the basement membrane. Its function is as follows. Binding to cells via a high affinity receptor, laminin is thought to mediate the attachment, migration and organization of cells into tissues during embryonic development by interacting with other extracellular matrix components. This chain is Laminin subunit beta-2 (Lamb2), found in Rattus norvegicus (Rat).